We begin with the raw amino-acid sequence, 228 residues long: Ion-translocating oxidoreductase complex subunit G (228 aa).

A helical membrane pass occupies residues 35 to 55 (ALSLGLVCALVAVALLLGNQL). FMN phosphoryl threonine is present on T197.

The protein belongs to the RnfG family. As to quaternary structure, the complex is composed of six subunits: RnfA, RnfB, RnfC, RnfD, RnfE and RnfG. FMN is required as a cofactor.

It localises to the cell inner membrane. Part of a membrane-bound complex that couples electron transfer with translocation of ions across the membrane. This Stutzerimonas stutzeri (Pseudomonas stutzeri) protein is Ion-translocating oxidoreductase complex subunit G.